We begin with the raw amino-acid sequence, 269 residues long: Type II iodothyronine deiodinase (269 aa).

The Lumenal segment spans residues 1 to 9 (MGILSVDLL). Residues 10–34 (ITLQILPVFFSNCLFLALYDSVILL) form a helical; Signal-anchor for type III membrane protein membrane-spanning segment. Topologically, residues 35-269 (KHVVLLLSRS…KNFSKRUKKT (235 aa)) are cytoplasmic. Sec133 is an active-site residue. Non-standard amino acids (selenocysteine) are located at Sec133 and Sec266.

This sequence belongs to the iodothyronine deiodinase family. In terms of assembly, predominantly monomer. Can form homodimers but homodimerization is not essential for enzyme activity. Interacts with USP20 and USP33. Interacts with MARCHF6. In terms of processing, ubiquitinated by MARCHF6, leading to its degradation by the proteasome. Deubiquitinated by USP20 and USP33. As to expression, more expressed in pituitary than in brain, low to undetectable levels in thyroid and skeletal muscle.

It localises to the endoplasmic reticulum membrane. The catalysed reaction is 3,3',5-triiodo-L-thyronine + iodide + A + H(+) = L-thyroxine + AH2. It carries out the reaction 3,3'-diiodo-L-thyronine + iodide + A + H(+) = 3,3',5'-triiodo-L-thyronine + AH2. The enzyme catalyses 3'-iodo-L-thyronine + iodide + A + H(+) = 3',5'-diiodo-L-thyronine + AH2. It catalyses the reaction 3,3'-diiodothyronamine + iodide + A + H(+) = 3,3',5'-triiodothyronamine + AH2. The catalysed reaction is 3'-iodothyronamine + iodide + A + H(+) = 3',5'-diiodothyronamine + AH2. Its function is as follows. Plays a crucial role in the metabolism of thyroid hormones (TH) and has specific roles in TH activation and inactivation by deiodination.Catalyzes the deiodination of L-thyroxine (T4) to 3,5,3'-triiodothyronine (T3) and 3,3',5'-triiodothyronine (rT3) to 3,3'-diiodothyronine (3,3'-T2) via outer-ring deiodination (ORD). Catalyzes the deiodination of 3',5'-diiodothyronine (3',5'-T2) to 3'-monoiodothyronine (3'-T1) via ORD. Catalyzes the phenolic ring deiodinations of 3,3',5'-triiodothyronamine and 3',5'- diiodothyronamine. The polypeptide is Type II iodothyronine deiodinase (DIO2) (Sus scrofa (Pig)).